The primary structure comprises 153 residues: Large ribosomal subunit protein bL9 (153 aa).

It belongs to the bacterial ribosomal protein bL9 family.

Functionally, binds to the 23S rRNA. The chain is Large ribosomal subunit protein bL9 from Gloeobacter violaceus (strain ATCC 29082 / PCC 7421).